Here is a 468-residue protein sequence, read N- to C-terminus: Uronate isomerase (468 aa).

It belongs to the metallo-dependent hydrolases superfamily. Uronate isomerase family.

The catalysed reaction is D-glucuronate = D-fructuronate. It catalyses the reaction aldehydo-D-galacturonate = keto-D-tagaturonate. It functions in the pathway carbohydrate metabolism; pentose and glucuronate interconversion. The protein is Uronate isomerase of Marinomonas sp. (strain MWYL1).